The primary structure comprises 778 residues: Double zinc ribbon and ankyrin repeat-containing protein 1 (778 aa).

Ser179 and Ser201 each carry phosphoserine. 2 DZANK-type zinc fingers span residues 230–289 and 359–407; these read CAHC…CVVC and CSRC…GSCG. ANK repeat units lie at residues 631–662 and 666–695; these read ENKL…DPNC and QGRP…DIDQ. Position 768 is a phosphoserine (Ser768).

As to quaternary structure, interacts with NINL. Associates with DYNC1H1 and multiple dynein intermediate and light chains as well as actin-binding proteins.

The protein resides in the cytoplasm. The protein localises to the cytoskeleton. Its subcellular location is the microtubule organizing center. It is found in the centrosome. It localises to the cilium basal body. Its function is as follows. Involved in vesicle transport in photoreceptor cells. In Mus musculus (Mouse), this protein is Double zinc ribbon and ankyrin repeat-containing protein 1 (Dzank1).